The primary structure comprises 186 residues: Alkyl hydroperoxide reductase AhpD (186 aa).

C131 serves as the catalytic Proton donor. A disulfide bridge connects residues C131 and C134. The active-site Cysteine sulfenic acid (-SOH) intermediate is C134.

The protein belongs to the AhpD family.

The catalysed reaction is N(6)-[(R)-dihydrolipoyl]-L-lysyl-[lipoyl-carrier protein] + a hydroperoxide = N(6)-[(R)-lipoyl]-L-lysyl-[lipoyl-carrier protein] + an alcohol + H2O. Its function is as follows. Antioxidant protein with alkyl hydroperoxidase activity. Required for the reduction of the AhpC active site cysteine residues and for the regeneration of the AhpC enzyme activity. This Rhodospirillum centenum (strain ATCC 51521 / SW) protein is Alkyl hydroperoxide reductase AhpD.